The sequence spans 740 residues: N-acetylated-alpha-linked acidic dipeptidase 2 (740 aa).

The Cytoplasmic portion of the chain corresponds to 1–7 (MARPRHL). A helical; Signal-anchor for type II membrane protein membrane pass occupies residues 8–31 (RGLGMCITAVLASFIAGFTVGWFI). The Extracellular segment spans residues 32–740 (KPLKETTTSA…AAAGTLTNVL (709 aa)). N-linked (GlcNAc...) asparagine glycosylation is found at Asn111, Asn143, and Asn185. Positions 200 and 247 each coordinate substrate. Residues Thr259 and Tyr262 each coordinate Ca(2+). The NAALADase stretch occupies residues 264 to 577 (AKEYTFRLPV…QLRGALVYEL (314 aa)). An N-linked (GlcNAc...) asparagine glycan is attached at Asn314. Positions 367 and 377 each coordinate Zn(2+). Glu414 is a substrate binding site. Catalysis depends on Glu414, which acts as the Nucleophile; for NAALADase activity. Glu415 serves as a coordination point for Zn(2+). Ca(2+) contacts are provided by Glu423 and Glu426. Asp443 contacts Zn(2+). A glycan (N-linked (GlcNAc...) asparagine) is linked at Asn449. Residues 507–508 (SG), 524–526 (RAR), Tyr542, and 542–543 (YH) each bind substrate. His543 contacts Zn(2+). An N-linked (GlcNAc...) asparagine glycan is attached at Asn603. The active-site Charge relay system is Ser618. N-linked (GlcNAc...) asparagine glycosylation occurs at Asn628. Catalysis depends on charge relay system residues Asp656 and His679. 689–690 (KY) contributes to the substrate binding site.

It belongs to the peptidase M28 family. M28B subfamily. In terms of assembly, homodimer. Requires Zn(2+) as cofactor. Expressed ovary, testes and lung, but not brain.

It is found in the cell membrane. The catalysed reaction is Release of an unsubstituted, C-terminal glutamyl residue, typically from Ac-Asp-Glu or folylpoly-gamma-glutamates.. In terms of biological role, has N-acetylated-alpha-linked-acidic dipeptidase (NAALADase) activity. Also exhibits a dipeptidyl-peptidase IV type activity. Inactivates the peptide neurotransmitter N-acetylaspartylglutamate. The protein is N-acetylated-alpha-linked acidic dipeptidase 2 (Naalad2) of Mus musculus (Mouse).